The following is a 160-amino-acid chain: Small ribosomal subunit protein uS7 (160 aa).

It belongs to the universal ribosomal protein uS7 family. Part of the 30S ribosomal subunit. Contacts proteins S9 and S11.

In terms of biological role, one of the primary rRNA binding proteins, it binds directly to 16S rRNA where it nucleates assembly of the head domain of the 30S subunit. Is located at the subunit interface close to the decoding center, probably blocks exit of the E-site tRNA. This Rickettsia prowazekii (strain Madrid E) protein is Small ribosomal subunit protein uS7.